A 23-amino-acid polypeptide reads, in one-letter code: Acidic phospholipase CHA-E6a (23 aa).

Belongs to the phospholipase A2 family. Group II subfamily. D49 sub-subfamily. The cofactor is Ca(2+). Contains 7 disulfide bonds. In terms of tissue distribution, expressed by the venom gland.

Its subcellular location is the secreted. The enzyme catalyses a 1,2-diacyl-sn-glycero-3-phosphocholine + H2O = a 1-acyl-sn-glycero-3-phosphocholine + a fatty acid + H(+). Functionally, snake venom phospholipase A2 (PLA2) that shows high lipolytic (1048 umol/mg/min) and weak ADP-induced platelet aggregation activities. Also shows weak anticoagulant activity (IC(50) is less than 1.0 uM). PLA2 catalyzes the calcium-dependent hydrolysis of the 2-acyl groups in 3-sn-phosphoglycerides. In Crotalus horridus (Timber rattlesnake), this protein is Acidic phospholipase CHA-E6a.